The primary structure comprises 113 residues: Large ribosomal subunit protein bL17 (113 aa).

The protein belongs to the bacterial ribosomal protein bL17 family. In terms of assembly, part of the 50S ribosomal subunit. Contacts protein L32.

The sequence is that of Large ribosomal subunit protein bL17 from Caldicellulosiruptor saccharolyticus (strain ATCC 43494 / DSM 8903 / Tp8T 6331).